The primary structure comprises 349 residues: Biotin synthase (349 aa).

The 228-residue stretch at 60–287 (GDVELATLLS…KARVRLSAGR (228 aa)) folds into the Radical SAM core domain. Residues C75, C79, and C82 each coordinate [4Fe-4S] cluster. Residues C119, C150, C210, and R282 each coordinate [2Fe-2S] cluster.

Belongs to the radical SAM superfamily. Biotin synthase family. As to quaternary structure, homodimer. [4Fe-4S] cluster is required as a cofactor. The cofactor is [2Fe-2S] cluster.

It carries out the reaction (4R,5S)-dethiobiotin + (sulfur carrier)-SH + 2 reduced [2Fe-2S]-[ferredoxin] + 2 S-adenosyl-L-methionine = (sulfur carrier)-H + biotin + 2 5'-deoxyadenosine + 2 L-methionine + 2 oxidized [2Fe-2S]-[ferredoxin]. It functions in the pathway cofactor biosynthesis; biotin biosynthesis; biotin from 7,8-diaminononanoate: step 2/2. Catalyzes the conversion of dethiobiotin (DTB) to biotin by the insertion of a sulfur atom into dethiobiotin via a radical-based mechanism. This chain is Biotin synthase, found in Albidiferax ferrireducens (strain ATCC BAA-621 / DSM 15236 / T118) (Rhodoferax ferrireducens).